Reading from the N-terminus, the 242-residue chain is Caffeoyl-CoA O-methyltransferase 3 (242 aa).

Lys-16 contributes to the substrate binding site. S-adenosyl-L-methionine is bound by residues Thr-58, Glu-80, 82-83 (GV), Ser-88, Asp-106, and Ala-135. Residue Asp-158 coordinates substrate. Asp-158 lines the a divalent metal cation pocket. Position 160 (Asp-160) interacts with S-adenosyl-L-methionine. 2 residues coordinate a divalent metal cation: Asp-184 and Asn-185. Asn-189 serves as a coordination point for substrate.

The protein belongs to the class I-like SAM-binding methyltransferase superfamily. Cation-dependent O-methyltransferase family. CCoAMT subfamily. Mg(2+) serves as cofactor. Mostly expressed in the bottom and middle parts of the stems.

The catalysed reaction is (E)-caffeoyl-CoA + S-adenosyl-L-methionine = (E)-feruloyl-CoA + S-adenosyl-L-homocysteine + H(+). Its pathway is aromatic compound metabolism; phenylpropanoid biosynthesis. Functionally, methylates caffeoyl-CoA to feruloyl-CoA and 5-hydroxyferuloyl-CoA to sinapoyl-CoA. Plays a role in the synthesis of feruloylated polysaccharides. Involved in the reinforcement of the plant cell wall. Also involved in the responding to wounding or pathogen challenge by the increased formation of cell wall-bound ferulic acid polymers. Also methylates free caffeic and 5-hydroxyferulic acids. This Nicotiana tabacum (Common tobacco) protein is Caffeoyl-CoA O-methyltransferase 3 (CCOAOMT3).